A 257-amino-acid chain; its full sequence is Gamma-secretase subunit APH-1B (257 aa).

7 consecutive transmembrane segments (helical) span residues 5–25 (VFFG…VFTI), 32–52 (VIFL…SSVF), 66–86 (PVQN…QELF), 115–135 (LLAY…SFVN), 160–180 (AFMT…FFDG), 186–206 (WYTL…TFLS), and 213–233 (LVTA…VAGG).

The protein belongs to the APH-1 family. As to quaternary structure, probable component of the gamma-secretase complex, a complex composed of a presenilin homodimer (PSEN1 or PSEN2), nicastrin (NCSTN), APH1 (APH1A or APH1B) and PEN2. Such minimal complex is sufficient for secretase activity, although other components may exist. Interacts with PSEN1 and PSEN2.

It localises to the membrane. Functionally, probable subunit of the gamma-secretase complex, an endoprotease complex that catalyzes the intramembrane cleavage of integral proteins such as Notch receptors and APP (amyloid-beta precursor protein). It probably represents a stabilizing cofactor for the presenilin homodimer that promotes the formation of a stable complex. Probably present in a minority of gamma-secretase complexes compared to APH1A. This is Gamma-secretase subunit APH-1B (Aph1b) from Mus musculus (Mouse).